We begin with the raw amino-acid sequence, 334 residues long: Protein-methionine-sulfoxide reductase catalytic subunit MsrP (334 aa).

A signal peptide (tat-type signal) is located at residues 1–44; sequence MKKNQFLKESDITAESVFFMKRRQVLKALGISAAALSLPHAAHA. Residues asparagine 88, 91 to 92, cysteine 146, threonine 181, asparagine 233, arginine 238, and 249 to 251 each bind Mo-molybdopterin; these read YE and GIK.

It belongs to the MsrP family. As to quaternary structure, heterodimer of a catalytic subunit (MsrP) and a heme-binding subunit (MsrQ). Requires Mo-molybdopterin as cofactor. Predicted to be exported by the Tat system. The position of the signal peptide cleavage has not been experimentally proven.

It localises to the periplasm. It carries out the reaction L-methionyl-[protein] + a quinone + H2O = L-methionyl-(S)-S-oxide-[protein] + a quinol. The enzyme catalyses L-methionyl-[protein] + a quinone + H2O = L-methionyl-(R)-S-oxide-[protein] + a quinol. In terms of biological role, part of the MsrPQ system that repairs oxidized periplasmic proteins containing methionine sulfoxide residues (Met-O), using respiratory chain electrons. Thus protects these proteins from oxidative-stress damage caused by reactive species of oxygen and chlorine generated by the host defense mechanisms. MsrPQ is essential for the maintenance of envelope integrity under bleach stress, rescuing a wide series of structurally unrelated periplasmic proteins from methionine oxidation, including the primary periplasmic chaperone SurA and the lipoprotein Pal. The catalytic subunit MsrP is non-stereospecific, being able to reduce both (R-) and (S-) diastereoisomers of methionine sulfoxide. In Shigella dysenteriae serotype 1 (strain Sd197), this protein is Protein-methionine-sulfoxide reductase catalytic subunit MsrP.